A 122-amino-acid polypeptide reads, in one-letter code: Small ribosomal subunit protein uS13 (122 aa).

Residues 99 to 122 (RGQRTHTNARTRKGPAKAIAGKKK) are disordered.

It belongs to the universal ribosomal protein uS13 family. In terms of assembly, part of the 30S ribosomal subunit. Forms a loose heterodimer with protein S19. Forms two bridges to the 50S subunit in the 70S ribosome.

Its function is as follows. Located at the top of the head of the 30S subunit, it contacts several helices of the 16S rRNA. In the 70S ribosome it contacts the 23S rRNA (bridge B1a) and protein L5 of the 50S subunit (bridge B1b), connecting the 2 subunits; these bridges are implicated in subunit movement. Contacts the tRNAs in the A and P-sites. This chain is Small ribosomal subunit protein uS13, found in Rhizobium etli (strain CIAT 652).